A 134-amino-acid polypeptide reads, in one-letter code: S-protein homolog 31 (134 aa).

The N-terminal stretch at 1–21 (MKILSVFLFVFSIYIFGHVSG) is a signal peptide. An N-linked (GlcNAc...) asparagine glycan is attached at N87.

Belongs to the plant self-incompatibility (S1) protein family.

It is found in the secreted. The sequence is that of S-protein homolog 31 from Arabidopsis thaliana (Mouse-ear cress).